Reading from the N-terminus, the 797-residue chain is Striatin-3 (797 aa).

At methionine 1 the chain carries N-acetylmethionine. Gly residues-rich tracts occupy residues 1-12 and 33-43; these read MDELAGGGGGGP and GGNGAAGGGGP. The interval 1–60 is disordered; it reads MDELAGGGGGGPAMASPPRQQQGPGGNMSLSPGGNGAAGGGGPPATEGAGPAAGPELSRP. Positions 44–55 are enriched in low complexity; it reads PATEGAGPAAGP. The caveolin-binding stretch occupies residues 71–79; it reads YIQHEWARF. Residues 77-136 adopt a coiled-coil conformation; it reads ARFEMERAHWEVERAELQARIAFLQGERKGQENLKKDLVRRIKMLEYALKQERAKYHKLK. At threonine 150 the chain carries Phosphothreonine. A calmodulin-binding region spans residues 166 to 183; that stretch reads QNSQLTWKQGRQLLRQYL. Residues serine 202, serine 214, serine 229, serine 257, and serine 335 each carry the phosphoserine modification. Residues 313–336 are disordered; that stretch reads DGEGAGEARSSGDGTEWDKDDLSP. WD repeat units lie at residues 478–517, 531–570, 584–623, 679–718, 721–760, and 767–796; these read SHFD…PAKK, AHIG…VDPY, AHTD…PCIC, QSSN…MIHS, AHLD…CVQE, and KLDE…AKVF.

This sequence belongs to the WD repeat striatin family. Tetramerizes. Part of the core of STRIPAK complexes composed of PP2A catalytic and scaffolding subunits, the striatins (PP2A regulatory subunits), the striatin-associated proteins MOB4, STRIP1 and STRIP2, PDCD10 and members of the STE20 kinases, such as STK24 and STK26. The STRIPAK complex can be extended by adapter proteins such as SLMAP:SIKE1 or CTTNBP2NL. Interacts with CDC42BPB.

The protein resides in the cytoplasm. It is found in the membrane. In terms of biological role, calmodulin-binding scaffolding protein which is the center of the striatin-interacting phosphatase and kinase (STRIPAK) complexes. STRIPAK complexes have critical roles in protein (de)phosphorylation and are regulators of multiple signaling pathways including Hippo, MAPK, nuclear receptor and cytoskeleton remodeling. Different types of STRIPAK complexes are involved in a variety of biological processes such as cell growth, differentiation, apoptosis, metabolism and immune regulation. The chain is Striatin-3 (STRN3) from Bos taurus (Bovine).